The chain runs to 599 residues: Elongation factor 4 (599 aa).

One can recognise a tr-type G domain in the interval 4 to 186 (DNIRNFSIIA…EIVNKIPPPR (183 aa)). GTP-binding positions include 16 to 21 (DHGKST) and 133 to 136 (NKID).

The protein belongs to the TRAFAC class translation factor GTPase superfamily. Classic translation factor GTPase family. LepA subfamily.

The protein resides in the cell inner membrane. The catalysed reaction is GTP + H2O = GDP + phosphate + H(+). In terms of biological role, required for accurate and efficient protein synthesis under certain stress conditions. May act as a fidelity factor of the translation reaction, by catalyzing a one-codon backward translocation of tRNAs on improperly translocated ribosomes. Back-translocation proceeds from a post-translocation (POST) complex to a pre-translocation (PRE) complex, thus giving elongation factor G a second chance to translocate the tRNAs correctly. Binds to ribosomes in a GTP-dependent manner. In Geotalea daltonii (strain DSM 22248 / JCM 15807 / FRC-32) (Geobacter daltonii), this protein is Elongation factor 4.